The primary structure comprises 112 residues: Putative pterin-4-alpha-carbinolamine dehydratase (112 aa).

The protein belongs to the pterin-4-alpha-carbinolamine dehydratase family.

It catalyses the reaction (4aS,6R)-4a-hydroxy-L-erythro-5,6,7,8-tetrahydrobiopterin = (6R)-L-erythro-6,7-dihydrobiopterin + H2O. The sequence is that of Putative pterin-4-alpha-carbinolamine dehydratase from Shewanella oneidensis (strain ATCC 700550 / JCM 31522 / CIP 106686 / LMG 19005 / NCIMB 14063 / MR-1).